Consider the following 107-residue polypeptide: MKEPVMRAIKDVTIDIDEPNTVRMNFRTKERVKRTIQRAAALSGLDDSAFTINAAYQSAIATIAAHEATLLQTTDYQAFFDALDNPPKPTDRLRDAFKRYSETVVSK.

This sequence belongs to the TacA antitoxin family. In terms of assembly, forms a complex with cognate antitoxin TacT.

In terms of biological role, probable antitoxin component of a type II toxin-antitoxin (TA) system. Should neutralize cognate toxin TacT (y4aS). This chain is Probable antitoxin TacA, found in Sinorhizobium fredii (strain NBRC 101917 / NGR234).